A 334-amino-acid chain; its full sequence is Putative lysine N-acyltransferase C17G9.06c (334 aa).

Residue histidine 248 participates in substrate binding. The active-site Proton acceptor is the glutamate 286.

This sequence belongs to the lysine N-acyltransferase mbtK family.

It is found in the cytoplasm. It localises to the nucleus. The protein is Putative lysine N-acyltransferase C17G9.06c of Schizosaccharomyces pombe (strain 972 / ATCC 24843) (Fission yeast).